The following is a 326-amino-acid chain: 3-isopropylmalate dehydrogenase (326 aa).

Substrate is bound by residues Arg81, Arg91, Arg112, and Asp198. 3 residues coordinate Mg(2+): Asp198, Asp222, and Asp226. Residue Gly255–Asn267 coordinates NAD(+).

It belongs to the isocitrate and isopropylmalate dehydrogenases family. In terms of assembly, homotetramer. Requires Mg(2+) as cofactor. Mn(2+) serves as cofactor.

It localises to the cytoplasm. The catalysed reaction is (2R,3S)-3-isopropylmalate + NAD(+) = 4-methyl-2-oxopentanoate + CO2 + NADH. It functions in the pathway amino-acid biosynthesis; L-leucine biosynthesis; L-leucine from 3-methyl-2-oxobutanoate: step 3/4. In terms of biological role, catalyzes the oxidation of 3-carboxy-2-hydroxy-4-methylpentanoate (3-isopropylmalate) to 3-carboxy-4-methyl-2-oxopentanoate. The product decarboxylates to 4-methyl-2 oxopentanoate. The polypeptide is 3-isopropylmalate dehydrogenase (leuB) (Archaeoglobus fulgidus (strain ATCC 49558 / DSM 4304 / JCM 9628 / NBRC 100126 / VC-16)).